The following is a 72-amino-acid chain: Large ribosomal subunit protein uL29 (72 aa).

This sequence belongs to the universal ribosomal protein uL29 family.

The chain is Large ribosomal subunit protein uL29 (rpmC) from Chlamydia muridarum (strain MoPn / Nigg).